The following is a 602-amino-acid chain: Beta-(1--&gt;2)glucan export ATP-binding/permease protein NdvA (602 aa).

Residues 21–306 form the ABC transmembrane type-1 domain; the sequence is GWLLAFANLL…VVSFINNVFM (286 aa). Helical transmembrane passes span 22–42, 63–83, 141–161, 163–183, 240–262, and 280–300; these read WLLA…PVLF, FLAA…LVAL, EHFA…YLNW, LAIL…FVVR, VLSW…VLAI, and IVMF…VVSF. The 234-residue stretch at 340-573 folds into the ABC transporter domain; the sequence is VEFNDVTFSY…GGHFAELARA (234 aa). Residue 373-380 participates in ATP binding; sequence GPTGAGKS.

The protein belongs to the ABC transporter superfamily. Beta-(1--&gt;2)glucan exporter (TC 3.A.1.108.1) family. Homodimer.

It localises to the cell inner membrane. The enzyme catalyses [(1-&gt;2)-beta-D-glucosyl](n)(in) + ATP + H2O = [(1-&gt;2)-beta-D-glucosyl](n)(out) + ADP + phosphate + H(+). Its function is as follows. Involved in beta-(1--&gt;2)glucan export. Transmembrane domains (TMD) form a pore in the inner membrane and the ATP-binding domain (NBD) is responsible for energy generation. This Bradyrhizobium diazoefficiens (strain JCM 10833 / BCRC 13528 / IAM 13628 / NBRC 14792 / USDA 110) protein is Beta-(1--&gt;2)glucan export ATP-binding/permease protein NdvA.